Consider the following 95-residue polypeptide: Acylphosphatase 2 (95 aa).

The 88-residue stretch at 6–93 (RVIVTVQGRV…PLPPGFEVRP (88 aa)) folds into the Acylphosphatase-like domain. Active-site residues include Arg-21 and Asn-39.

The protein belongs to the acylphosphatase family.

It catalyses the reaction an acyl phosphate + H2O = a carboxylate + phosphate + H(+). In Ralstonia nicotianae (strain ATCC BAA-1114 / GMI1000) (Ralstonia solanacearum), this protein is Acylphosphatase 2 (acyP2).